We begin with the raw amino-acid sequence, 427 residues long: Tumor necrosis factor receptor superfamily member 16 (427 aa).

The N-terminal stretch at 1 to 28 is a signal peptide; that stretch reads MGAGATGRAMDGPRLLLLLLLGVSLGGA. Topologically, residues 29–250 are extracellular; the sequence is KEACPTGLYT…PVVTRGTTDN (222 aa). TNFR-Cys repeat units follow at residues 31-64, 66-107, 108-146, and 148-188; these read ACPTGLYTHSGECCKACNLGEGVAQPCGANQTVC, PCLD…DAVC, RCAYGYYQDETTGRCEACRVCEAGSGLVFSCQDKQNTVC, and ECPD…DAEC. 12 disulfides stabilise this stretch: Cys-32-Cys-43, Cys-44-Cys-57, Cys-47-Cys-64, Cys-67-Cys-83, Cys-86-Cys-99, Cys-89-Cys-107, Cys-109-Cys-122, Cys-125-Cys-138, Cys-128-Cys-146, Cys-149-Cys-164, Cys-167-Cys-180, and Cys-170-Cys-188. Asn-60 carries an N-linked (GlcNAc...) asparagine glycan. The tract at residues 194–219 is disordered; that stretch reads RWITRSTPPEGSDSTAPSTQEPEAPP. The span at 197–214 shows a compositional bias: polar residues; that stretch reads TRSTPPEGSDSTAPSTQE. Residues 251–272 traverse the membrane as a helical segment; it reads LIPVYCSILAAVVVGLVAYIAF. The Cytoplasmic segment spans residues 273-427; the sequence is KRWNSCKQNK…CSESTATSPV (155 aa). 2 stretches are compositionally biased toward polar residues: residues 281 to 291 and 305 to 326; these read NKQGANSRPVN and SGISVDSQSLHDQQPHTQTASG. The tract at residues 281-338 is disordered; the sequence is NKQGANSRPVNQTPPPEGEKLHSDSGISVDSQSLHDQQPHTQTASGQALKGDGGLYSS. Ser-311 carries the post-translational modification Phosphoserine. Residues 326 to 341 form a mediates interaction with KIDINS220 region; that stretch reads GQALKGDGGLYSSLPP. The region spanning 344–421 is the Death domain; it reads REEVEKLLNG…DLVESLCSES (78 aa).

As to quaternary structure, homodimer; disulfide-linked. Heterodimer with SORCS2. The extracellular domains of the heterodimer bind NGF. The cytoplasmic region of the heterodimer binds TRIO. NGF binding mediates dissociation of TRIO from the receptor complex. Interacts with RTN4R. Interacts with TRAF2, TRAF4, TRAF6, PTPN13 and RANBP9. Interacts through TRAF6 with SQSTM1 which bridges NGFR to NTRK1. Interacts with BEX1. Interacts with BEX3. Interacts with KIDINS220 and NTRK1. Can form a ternary complex with NTRK1 and KIDINS220 and this complex is affected by the expression levels of KIDINS220. An increase in KIDINS220 expression leads to a decreased association of NGFR and NTRK1. Interacts with NTRK2; may regulate the ligand specificity of the NTRK2 receptor. Interacts (via death domain) with RAB31. Interacts with LINGO1. Interacts with NRADD. Interacts with MAGED1; the interaction antagonizes the association NGFR:NTRK1. Interacts (via death domain) with ARHGDIA and RIPK2. Interacts with BFAR. Post-translationally, N- and O-glycosylated. In terms of processing, O-linked glycans consist of Gal(1-3)GalNAc core elongated by 1 or 2 NeuNAc. Phosphorylated on serine residues.

The protein localises to the cell membrane. Its subcellular location is the cytoplasm. It localises to the perikaryon. The protein resides in the cell projection. It is found in the growth cone. The protein localises to the dendritic spine. Low affinity receptor which can bind to NGF, BDNF, NTF3, and NTF4. Forms a heterodimeric receptor with SORCS2 that binds the precursor forms of NGF, BDNF and NTF3 with high affinity, and has much lower affinity for mature NGF and BDNF. Plays an important role in differentiation and survival of specific neuronal populations during development. Can mediate cell survival as well as cell death of neural cells. Plays a role in the inactivation of RHOA. Plays a role in the regulation of the translocation of GLUT4 to the cell surface in adipocytes and skeletal muscle cells in response to insulin, probably by regulating RAB31 activity, and thereby contributes to the regulation of insulin-dependent glucose uptake. Necessary for the circadian oscillation of the clock genes BMAL1, PER1, PER2 and NR1D1 in the suprachiasmatic nucleus (SCmgetaN) of the brain and in liver and of the genes involved in glucose and lipid metabolism in the liver. Together with BFAR negatively regulates NF-kappa-B and JNK-related signaling pathways. The protein is Tumor necrosis factor receptor superfamily member 16 (NGFR) of Homo sapiens (Human).